The primary structure comprises 427 residues: Amino acid transporter AVT3A (427 aa).

Residues 1–35 are disordered; it reads MRYDQEAGSSSHSLPSGSSSHSLPPTEDTPLLGPR. The Cytoplasmic segment spans residues 1–42; that stretch reads MRYDQEAGSSSHSLPSGSSSHSLPPTEDTPLLGPRTLSSQPK. Residues 8–24 show a composition bias toward low complexity; it reads GSSSHSLPSGSSSHSLP. A helical transmembrane segment spans residues 43–63; that stretch reads TFANVFIAIVGAGVLGLPYTF. At 64–69 the chain is on the vacuolar side; it reads KKTGWL. The chain crosses the membrane as a helical span at residues 70 to 90; that stretch reads LGLLTLLFVSSLTFFCMMLLV. Over 91–122 the chain is Cytoplasmic; the sequence is HTRRKLESLSGFNSITSFGDLGESVCGPAGRL. A helical membrane pass occupies residues 123–143; the sequence is VVDVMLVLSQSGFCVSYLIFV. Over 144–157 the chain is Vacuolar; it reads ATTMANLLSRGTEH. Residues 158-178 traverse the membrane as a helical segment; sequence ILGLDAASIYLWGCFPFQLGL. The Cytoplasmic segment spans residues 179-186; the sequence is NSIPSLTH. Residues 187-207 form a helical membrane-spanning segment; it reads LAPLSIFADIVDVAATLVVMV. At 208-227 the chain is on the vacuolar side; the sequence is QDVFIFLKRRPPLRVFGGVS. Residues 228–248 form a helical membrane-spanning segment; sequence VFFYGLGVAVYAFEGIGMVLP. The Cytoplasmic portion of the chain corresponds to 249-262; that stretch reads LELEAKYKDKFGRA. The helical transmembrane segment at 263–283 threads the bilayer; it reads LGLAMGLISIMYGAFGLLGYM. Over 284 to 300 the chain is Vacuolar; it reads AYGEETKDIITTNLGTG. A helical transmembrane segment spans residues 301 to 321; sequence VVSTLVQLGLAINLFFTFPLM. Over 322–339 the chain is Cytoplasmic; it reads MQPVYEVVERRLCSSRYS. A helical transmembrane segment spans residues 340–360; sequence VWVRWATVLVVTLVALLVPNF. The Vacuolar segment spans residues 361–362; sequence AD. Residues 363-383 form a helical membrane-spanning segment; sequence FLSLVGSSVCVVLGFVLPSLF. Topologically, residues 384–396 are cytoplasmic; sequence HLQAFKNELSITR. A helical membrane pass occupies residues 397-417; that stretch reads IVVDVLVFLIGVMIAITGTWT. Residues 418–427 are Vacuolar-facing; that stretch reads AVHEILTSKA.

It belongs to the amino acid/polyamine transporter 2 family. Amino acid/auxin permease (AAAP) (TC 2.A.18.8) subfamily. As to expression, ubiquitous.

It localises to the vacuole membrane. In terms of biological role, translocates preferentially neutral amino acids and to a lesser extent aromatic amino acids from the vacuole to the cytoplasm. Requires ATP for function. The polypeptide is Amino acid transporter AVT3A (Arabidopsis thaliana (Mouse-ear cress)).